We begin with the raw amino-acid sequence, 120 residues long: NAD(P)H-quinone oxidoreductase subunit 3, chloroplastic (120 aa).

Helical transmembrane passes span 9-29 (IFWAFLIISSLIPILAFLISG), 64-84 (MFALVFVVFDVETVFLYPWAM), and 88-108 (VLGVSVFIEALIFVLILIVGL).

This sequence belongs to the complex I subunit 3 family. NDH is composed of at least 16 different subunits, 5 of which are encoded in the nucleus.

The protein resides in the plastid. Its subcellular location is the chloroplast thylakoid membrane. The catalysed reaction is a plastoquinone + NADH + (n+1) H(+)(in) = a plastoquinol + NAD(+) + n H(+)(out). It catalyses the reaction a plastoquinone + NADPH + (n+1) H(+)(in) = a plastoquinol + NADP(+) + n H(+)(out). NDH shuttles electrons from NAD(P)H:plastoquinone, via FMN and iron-sulfur (Fe-S) centers, to quinones in the photosynthetic chain and possibly in a chloroplast respiratory chain. The immediate electron acceptor for the enzyme in this species is believed to be plastoquinone. Couples the redox reaction to proton translocation, and thus conserves the redox energy in a proton gradient. The protein is NAD(P)H-quinone oxidoreductase subunit 3, chloroplastic of Lupinus luteus (European yellow lupine).